We begin with the raw amino-acid sequence, 185 residues long: MAPKGSSKQQSEEDLLLQDFSRNLSAKSSALFFGNAFIVSAIPIWLYWRIWHMDLIQSAVLYSVMTLVSTYLVAFAYKNVKFVLKHKVAQKREDAVSKEVTRKLSEADNRKMSRKEKDERILWKKNEVADYEATTFSIFYNNTLFLVVVIVASFFILKNFNPTVNYILSISASSGLIALLSTGSK.

The residue at position 1 (methionine 1) is an N-acetylmethionine. The Lumenal segment spans residues 1–27 (MAPKGSSKQQSEEDLLLQDFSRNLSAK). Residues serine 7 and serine 11 each carry the phosphoserine modification. The chain crosses the membrane as a helical span at residues 28–48 (SSALFFGNAFIVSAIPIWLYW). Residues 49–54 (RIWHMD) lie on the Cytoplasmic side of the membrane. Residues 55 to 76 (LIQSAVLYSVMTLVSTYLVAFA) form a helical membrane-spanning segment. Residues 77–135 (YKNVKFVLKHKVAQKREDAVSKEVTRKLSEADNRKMSRKEKDERILWKKNEVADYEATT) are Lumenal-facing. At serine 105 the chain carries Phosphoserine. Residues 136–157 (FSIFYNNTLFLVVVIVASFFIL) traverse the membrane as a helical segment. Topologically, residues 158-163 (KNFNPT) are cytoplasmic. Residues 164-184 (VNYILSISASSGLIALLSTGS) traverse the membrane as a helical segment.

The protein belongs to the TRAP-gamma family. Heterotetramer of TRAP-alpha, TRAP-beta, TRAP-delta and TRAP-gamma.

The protein resides in the endoplasmic reticulum membrane. In terms of biological role, TRAP proteins are part of a complex whose function is to bind calcium to the ER membrane and thereby regulate the retention of ER resident proteins. This is Translocon-associated protein subunit gamma (SSR3) from Homo sapiens (Human).